The following is a 147-amino-acid chain: uncharacterized protein (147 aa).

2 consecutive 4Fe-4S ferredoxin-type domains span residues 80–109 (WYPK…AENG) and 110–141 (KVVV…FPDE). [4Fe-4S] cluster is bound by residues C89, C92, C95, C99, C119, C123, C126, and C130.

[4Fe-4S] cluster serves as cofactor.

This is an uncharacterized protein from Methanocaldococcus jannaschii (strain ATCC 43067 / DSM 2661 / JAL-1 / JCM 10045 / NBRC 100440) (Methanococcus jannaschii).